A 366-amino-acid polypeptide reads, in one-letter code: Chorismate synthase (366 aa).

Residue R48 participates in NADP(+) binding. FMN contacts are provided by residues 125–127, 238–239, G278, 293–297, and R319; these read RSS, NA, and KPTSS.

It belongs to the chorismate synthase family. As to quaternary structure, homotetramer. The cofactor is FMNH2.

It catalyses the reaction 5-O-(1-carboxyvinyl)-3-phosphoshikimate = chorismate + phosphate. Its pathway is metabolic intermediate biosynthesis; chorismate biosynthesis; chorismate from D-erythrose 4-phosphate and phosphoenolpyruvate: step 7/7. Catalyzes the anti-1,4-elimination of the C-3 phosphate and the C-6 proR hydrogen from 5-enolpyruvylshikimate-3-phosphate (EPSP) to yield chorismate, which is the branch point compound that serves as the starting substrate for the three terminal pathways of aromatic amino acid biosynthesis. This reaction introduces a second double bond into the aromatic ring system. The chain is Chorismate synthase from Alkalilimnicola ehrlichii (strain ATCC BAA-1101 / DSM 17681 / MLHE-1).